The sequence spans 432 residues: Enolase (432 aa).

Residue Gln-167 coordinates (2R)-2-phosphoglycerate. Glu-209 functions as the Proton donor in the catalytic mechanism. 3 residues coordinate Mg(2+): Asp-246, Glu-291, and Asp-318. Positions 343, 372, 373, and 394 each coordinate (2R)-2-phosphoglycerate. The Proton acceptor role is filled by Lys-343.

Belongs to the enolase family. Component of the RNA degradosome, a multiprotein complex involved in RNA processing and mRNA degradation. The cofactor is Mg(2+).

It localises to the cytoplasm. Its subcellular location is the secreted. It is found in the cell surface. The catalysed reaction is (2R)-2-phosphoglycerate = phosphoenolpyruvate + H2O. It participates in carbohydrate degradation; glycolysis; pyruvate from D-glyceraldehyde 3-phosphate: step 4/5. In terms of biological role, catalyzes the reversible conversion of 2-phosphoglycerate (2-PG) into phosphoenolpyruvate (PEP). It is essential for the degradation of carbohydrates via glycolysis. In Colwellia psychrerythraea (strain 34H / ATCC BAA-681) (Vibrio psychroerythus), this protein is Enolase.